The sequence spans 349 residues: tRNA pseudouridine synthase D (349 aa).

Phe-27 contacts substrate. Asp-80 acts as the Nucleophile in catalysis. Asn-129 is a substrate binding site. The region spanning 155-303 (GVPNYFGAQR…VEASRRAMLL (149 aa)) is the TRUD domain. A substrate-binding site is contributed by Phe-329.

Belongs to the pseudouridine synthase TruD family.

It carries out the reaction uridine(13) in tRNA = pseudouridine(13) in tRNA. Its function is as follows. Responsible for synthesis of pseudouridine from uracil-13 in transfer RNAs. The polypeptide is tRNA pseudouridine synthase D (Salmonella dublin (strain CT_02021853)).